Reading from the N-terminus, the 36-residue chain is Photosystem I reaction center subunit VIII (36 aa).

A helical membrane pass occupies residues Pro7–Tyr29.

This sequence belongs to the PsaI family.

It localises to the plastid. It is found in the chloroplast thylakoid membrane. Its function is as follows. May help in the organization of the PsaL subunit. This Psilotum nudum (Whisk fern) protein is Photosystem I reaction center subunit VIII.